Consider the following 241-residue polypeptide: Probable pectate lyase D (241 aa).

Positions 1-17 (MYQKSLLFSLLATSALA) are cleaved as a signal peptide. Asparagine 215 carries an N-linked (GlcNAc...) asparagine glycan. Positions 215-241 (NNSGDEPEEVSEGPSDACQYSEPLSSC) are disordered.

The protein belongs to the polysaccharide lyase 3 family. The cofactor is Ca(2+).

The protein resides in the secreted. It carries out the reaction Eliminative cleavage of (1-&gt;4)-alpha-D-galacturonan to give oligosaccharides with 4-deoxy-alpha-D-galact-4-enuronosyl groups at their non-reducing ends.. Functionally, pectinolytic enzyme consist of four classes of enzymes: pectin lyase, polygalacturonase, pectin methylesterase and rhamnogalacturonase. Among pectinolytic enzymes, pectin lyase is the most important in depolymerization of pectin, since it cleaves internal glycosidic bonds of highly methylated pectins. Favors pectate, the anion, over pectin, the methyl ester. This is Probable pectate lyase D (plyD) from Neosartorya fischeri (strain ATCC 1020 / DSM 3700 / CBS 544.65 / FGSC A1164 / JCM 1740 / NRRL 181 / WB 181) (Aspergillus fischerianus).